Reading from the N-terminus, the 196-residue chain is Chromophore lyase CpcT/CpeT (196 aa).

It belongs to the CpcT/CpeT biliprotein lyase family.

In terms of biological role, covalently attaches a chromophore to Cys residue(s) of phycobiliproteins. The sequence is that of Chromophore lyase CpcT/CpeT from Thermosynechococcus vestitus (strain NIES-2133 / IAM M-273 / BP-1).